Reading from the N-terminus, the 336-residue chain is Cytoplasmic envelopment protein 2 (336 aa).

The segment at 67–69 (KKK) is interaction with host BBLF1.

The protein belongs to the herpesviridae cytoplasmic envelopment protein 2 family. In terms of assembly, homodimer. Interacts with BBLF1. Interacts with the capsid. Interacts with BKRF4 (via C-terminus); this interaction is important for infectious virion production. Interacts with host TYK2; this interaction participates to the inhibition of host type I IFN signaling. Interacts with host STAT1; this interaction leads to STAT1 dephosphorylation and inhibition. Interacts with host STAT2; this interaction leads to STAT2 degradation. Interacts with host CUL1; this interaction might facilitate CUL1 recruitment to STAT2, leading to ubiquitination and degradation of the latter. Interacts with host AGO2; this interaction participates to the host miRNA regulation leading to enhanced SUMOylation.

Its subcellular location is the virion tegument. It localises to the host cytoplasm. The protein resides in the host nucleus. The protein localises to the host Golgi apparatus. It is found in the host trans-Golgi network. In terms of biological role, plays a critical role in cytoplasmic virus egress. Participates in the final step of tegumentation and envelope acquisition within the host cytoplasm by directly interacting with the capsid. Upon virion binding to target cell, a signaling cascade is triggered to disrupt the interaction with the capsid, thereby preparing capsid uncoating. Activates the AP-1 pathway and enhances EBV reactivation and virus release. Inhibits type I IFN-induced TYK2, STAT1 and STAT3 phosphorylation, thereby impairing type I IFN signaling and counteracting the ability of IFN-alpha to suppress the reactivation of EBV. Recruits SHP1 phosphatase to dephosphorylate STAT1. Mediates STAT2 ubiquitination and proteasomal degradation. Also suppresses type II and type III IFN signaling. Contributes to G1/S arrest in the host cell. Acts as an miRNA regulator that interferes with the function of RISC in miRNA-mediated mRNA silencing. As a result, SUMOylation is increased. When encapsulated in the exosomes released by EBV-infected host cells, may facilitate the infection in recipient cells. The chain is Cytoplasmic envelopment protein 2 from Epstein-Barr virus (strain AG876) (HHV-4).